Consider the following 619-residue polypeptide: Probable galacturonosyltransferase 7 (619 aa).

The Cytoplasmic portion of the chain corresponds to 1 to 19 (MKGGGGGGGGGGGGKRRWK). Residues 20 to 40 (VLVIGVLVLVILSMLVPLAFL) traverse the membrane as a helical; Signal-anchor for type II membrane protein segment. The Lumenal portion of the chain corresponds to 41-619 (LGLHNGFHSP…RFLSDCNVNP (579 aa)). Residues N68, N106, N132, N343, and N421 are each glycosylated (N-linked (GlcNAc...) asparagine). The interval 95-139 (KSDINVGSRDVNATSGTDSKKRGLPVSPTVVANPSPANKTKSEAS) is disordered. Residues 124–139 (VVANPSPANKTKSEAS) are compositionally biased toward polar residues.

It belongs to the glycosyltransferase 8 family. In terms of tissue distribution, expressed in roots, inflorescences, flowers, siliques, leaves and stems.

Its subcellular location is the golgi apparatus membrane. It functions in the pathway glycan metabolism; pectin biosynthesis. Its function is as follows. May be involved in pectin biosynthesis. This chain is Probable galacturonosyltransferase 7 (GAUT7), found in Arabidopsis thaliana (Mouse-ear cress).